The primary structure comprises 349 residues: MIAMTNAPRLIAWELTAGCNLNCVHCRGASTSSVPAGELTTDEAKHFIDEVASIGKPILILSGGEPLTRPDVFEIARYGTDAGLRVVLATNGTLLTPEIVEKLRAAGVQRLSVSIDGANAETHDNFRGMPGAFERTLAGIEVLRKADFPFQINTTVSKRNLEEITKTFELAKELGAVAYHVFFLVPTGRGDESDEVSPADYERILHWFYEMQKESKIQLKATCAPHYFRIMRQQAKKEGIEISVKTHGYEAMTKGCLGGTGFCFVSSVGKVFPCGYLPVLAGNIREQPFREIWENAEVFRKLRDPEELKGKCGICEYKKVCAGCRARAYAATGDYLEEEPYCIYRPGKK.

In terms of domain architecture, Radical SAM core spans 5 to 214 (TNAPRLIAWE…LHWFYEMQKE (210 aa)). Cysteine 19, cysteine 23, and cysteine 26 together coordinate [4Fe-4S] cluster.

The protein belongs to the radical SAM superfamily. Requires [4Fe-4S] cluster as cofactor.

It catalyses the reaction Fe-coproporphyrin III + 2 S-adenosyl-L-methionine = heme b + 2 5'-deoxyadenosine + 2 L-methionine + 2 CO2. It functions in the pathway porphyrin-containing compound metabolism; protoheme biosynthesis. Involved in siroheme-dependent heme b biosynthesis. Catalyzes the conversion of Fe-coproporphyrin III into heme by the oxidative decarboxylation of two propionate side chains. The sequence is that of AdoMet-dependent heme synthase from Methanosarcina barkeri (strain Fusaro / DSM 804).